A 475-amino-acid chain; its full sequence is Ribulose bisphosphate carboxylase large chain (475 aa).

Positions 1–2 (MV) are excised as a propeptide. An N-acetylproline modification is found at Pro3. Position 14 is an N6,N6,N6-trimethyllysine (Lys14). Asn123 and Thr173 together coordinate substrate. Lys175 functions as the Proton acceptor in the catalytic mechanism. Residue Lys177 coordinates substrate. Lys201, Asp203, and Glu204 together coordinate Mg(2+). An N6-carboxylysine modification is found at Lys201. The active-site Proton acceptor is the His294. Positions 295, 327, and 379 each coordinate substrate.

Belongs to the RuBisCO large chain family. Type I subfamily. In terms of assembly, heterohexadecamer of 8 large chains and 8 small chains. Requires Mg(2+) as cofactor.

It is found in the plastid. Its subcellular location is the chloroplast. The catalysed reaction is 2 (2R)-3-phosphoglycerate + 2 H(+) = D-ribulose 1,5-bisphosphate + CO2 + H2O. The enzyme catalyses D-ribulose 1,5-bisphosphate + O2 = 2-phosphoglycolate + (2R)-3-phosphoglycerate + 2 H(+). In terms of biological role, ruBisCO catalyzes two reactions: the carboxylation of D-ribulose 1,5-bisphosphate, the primary event in carbon dioxide fixation, as well as the oxidative fragmentation of the pentose substrate in the photorespiration process. Both reactions occur simultaneously and in competition at the same active site. This Stigeoclonium helveticum (Green alga) protein is Ribulose bisphosphate carboxylase large chain.